The sequence spans 655 residues: MTDPLVPAVLAFRDNGTPYSPLYDDIYHSAVGGLAQADYVFLKGNDLPSRWQKRRLFTVLETGFGMGINFLVTWAAWRADPDRCERLHFVSTEKHPFSREDLIAATNSSVADASIAALAEQLANAWPTLVPGTHRLEFEEGRVILTLVFGDAVQTLPTLWLRADAFYLDGFSPDRNPDLWTPAVFKSLARLAGDEATFATYTSSGDVKRSLQQAGFEYRKVDGFGWKRAMLVGRFAPRYRVRRHEPPLPLAVGERHAIVIGTGLAGCAAIERLTARGWRVTSLERHADVARDASGNPAGVFHPMMSRDDSVGSRITRAGFLYALRQWSALEHRGHRPLRGPEGLLQIAADEEEALAMAHTFASFAWPREYVVSVTRDDAERIANMRVARGGWLFPHGGWIDPASLCAAQCEAAGGLLERRFNVAAARVERLENQWIVFDENGAAVVSAPVVIFANAHEAARVAGLHYASTRSVRGQLTLLPADATNAPRLPVIGEGYALPLLDGVTLTGATYDIDDPDTRLRDGAHIENIERVAQMLPDMRDAFNVHAPSSLTGRVAFRCVTSDRLPMIGAFADEAAAIRDAGKLCGAWPLDLPRADGLYGAFAFGSRGLVWASLGAELMASQIEGEPWPIERDLAEALDPARFLLRALRQGTAS.

The interval Met1–Ala236 is tRNA (mnm(5)s(2)U34)-methyltransferase. Positions Ile260 to Ser655 are FAD-dependent cmnm(5)s(2)U34 oxidoreductase.

In the N-terminal section; belongs to the methyltransferase superfamily. tRNA (mnm(5)s(2)U34)-methyltransferase family. This sequence in the C-terminal section; belongs to the DAO family. It depends on FAD as a cofactor.

It localises to the cytoplasm. The catalysed reaction is 5-aminomethyl-2-thiouridine(34) in tRNA + S-adenosyl-L-methionine = 5-methylaminomethyl-2-thiouridine(34) in tRNA + S-adenosyl-L-homocysteine + H(+). Its function is as follows. Catalyzes the last two steps in the biosynthesis of 5-methylaminomethyl-2-thiouridine (mnm(5)s(2)U) at the wobble position (U34) in tRNA. Catalyzes the FAD-dependent demodification of cmnm(5)s(2)U34 to nm(5)s(2)U34, followed by the transfer of a methyl group from S-adenosyl-L-methionine to nm(5)s(2)U34, to form mnm(5)s(2)U34. This is tRNA 5-methylaminomethyl-2-thiouridine biosynthesis bifunctional protein MnmC from Paraburkholderia phymatum (strain DSM 17167 / CIP 108236 / LMG 21445 / STM815) (Burkholderia phymatum).